The chain runs to 276 residues: Carboxysome assembly protein CcmO (276 aa).

BMC domains are found at residues 16-100 and 120-204; these read ALGV…AVLP and AIGL…DSLP. Disordered stretches follow at residues 200–219 and 252–276; these read MDSLPEPQSDSEAAQPLQLP and QSALELAQETPLAEPLELPNPRDDQ.

The protein belongs to the bacterial microcompartments protein family. As to quaternary structure, homooligomerizes, possibly as a trimer, interacts with CcmK2 in the carboxysome.

It is found in the carboxysome. Functionally, required for formation of the carboxysome, a polyhedral inclusion where RuBisCO (ribulose bisphosphate carboxylase, rbcL-rbcS) is sequestered. Required for recruitment of major shell protein CcmK2 to the pre-carboxysome. Suggested to be a carboxysome shell protein, but it is not detected in gels, mass spectrometry or by protein sequencing. Its function is as follows. Beta-carboxysome assembly initiates when soluble RuBisCO is condensed into a liquid matrix in a pre-carboxysome by the RbcS-like domains of probably both CcmM58 and CcmM35. CcmN interacts with the N-terminus of CcmM58, and then recruits the CcmK2 major shell protein via CcmN's encapsulation peptide. Shell formation requires CcmK proteins and CcmO. CcmL caps the otherwise elongated carboxysome. Once fully encapsulated carboxysomes are formed, they migrate within the cell probably via interactions with the cytoskeleton. This Synechococcus elongatus (strain ATCC 33912 / PCC 7942 / FACHB-805) (Anacystis nidulans R2) protein is Carboxysome assembly protein CcmO.